The following is a 100-amino-acid chain: Small ribosomal subunit protein uS14c (100 aa).

This sequence belongs to the universal ribosomal protein uS14 family. As to quaternary structure, part of the 30S ribosomal subunit.

The protein resides in the plastid. It localises to the chloroplast. Functionally, binds 16S rRNA, required for the assembly of 30S particles. This is Small ribosomal subunit protein uS14c from Lobularia maritima (Sweet alyssum).